Here is a 312-residue protein sequence, read N- to C-terminus: Beta-ketoacyl-[acyl-carrier-protein] synthase III (312 aa).

Active-site residues include Cys112 and His237. Residues 238–242 form an ACP-binding region; that stretch reads QANIR. The active site involves Asn267.

The protein belongs to the thiolase-like superfamily. FabH family. Homodimer.

It is found in the cytoplasm. The catalysed reaction is malonyl-[ACP] + acetyl-CoA + H(+) = 3-oxobutanoyl-[ACP] + CO2 + CoA. Its pathway is lipid metabolism; fatty acid biosynthesis. Functionally, catalyzes the condensation reaction of fatty acid synthesis by the addition to an acyl acceptor of two carbons from malonyl-ACP. Catalyzes the first condensation reaction which initiates fatty acid synthesis and may therefore play a role in governing the total rate of fatty acid production. Possesses both acetoacetyl-ACP synthase and acetyl transacylase activities. Its substrate specificity determines the biosynthesis of branched-chain and/or straight-chain of fatty acids. The chain is Beta-ketoacyl-[acyl-carrier-protein] synthase III from Oceanobacillus iheyensis (strain DSM 14371 / CIP 107618 / JCM 11309 / KCTC 3954 / HTE831).